We begin with the raw amino-acid sequence, 747 residues long: Endoglucanase D (747 aa).

An N-terminal signal peptide occupies residues 1 to 39 (MHSASRTRARTRVRTAVSGLLAATVLAAPLTLVAAPAQA). Catalysis depends on E208, which acts as the Proton donor. E349 acts as the Nucleophile in catalysis. A disordered region spans residues 456 to 475 (APTGLRAGTPTASTVPLTWS). 2 consecutive Fibronectin type-III domains span residues 456–543 (APTG…TAAG) and 552–639 (VPTG…TAPD). Residues 465-475 (PTASTVPLTWS) are compositionally biased toward polar residues. Residues 638 to 747 (PDPTTGSCAV…TVGGATCTTR (110 aa)) enclose the CBM2 domain.

This sequence belongs to the glycosyl hydrolase 5 (cellulase A) family.

The enzyme catalyses Endohydrolysis of (1-&gt;4)-beta-D-glucosidic linkages in cellulose, lichenin and cereal beta-D-glucans.. It functions in the pathway glycan metabolism; cellulose degradation. The protein is Endoglucanase D (cenD) of Cellulomonas fimi.